The primary structure comprises 85 residues: Putative membrane protein insertion efficiency factor (85 aa).

This sequence belongs to the UPF0161 family.

Its subcellular location is the cell inner membrane. Functionally, could be involved in insertion of integral membrane proteins into the membrane. The polypeptide is Putative membrane protein insertion efficiency factor (Shewanella sediminis (strain HAW-EB3)).